The sequence spans 223 residues: Regulator of G-protein signaling 19 (223 aa).

Residues 1–30 (MPTPPEAEKQQTGPEEADQPPSMSSHDAAP) form a disordered region. The segment covering 20–29 (PPSMSSHDAA) has biased composition (low complexity). Phosphoserine occurs at positions 24 and 103. Residues 96–212 (SFDKLMHSPA…LSSPAYRALL (117 aa)) enclose the RGS domain. S157 carries the post-translational modification Phosphoserine; by MAPK1 and MAPK3. Residues 213 to 223 (LQGASQSSSEA) form an interaction with GIPC region.

Interacts with GIPC PDZ domain. Interacts with GNAO1. Post-translationally, fatty acylated. Heavily palmitoylated in the cysteine string motif. In terms of processing, phosphorylated, mainly on serine residues.

The protein localises to the membrane. In terms of biological role, inhibits signal transduction by increasing the GTPase activity of G protein alpha subunits thereby driving them into their inactive GDP-bound form. Binds to G-alpha subfamily 1 members, with the order G(i)a3 &gt; G(i)a1 &gt; G(o)a &gt;&gt; G(z)a/G(i)a2. Activity on G(z)-alpha is inhibited by phosphorylation and palmitoylation of the G-protein. In Bos taurus (Bovine), this protein is Regulator of G-protein signaling 19 (RGS19).